The chain runs to 1706 residues: PR domain zinc finger protein 2 (1706 aa).

The SET domain occupies 27–140; that stretch reads EEVRLFPSAV…PGEELLVWYN (114 aa). The tract at residues 154–342 is disordered; sequence ERASARSKRS…TPPPHTPRAR (189 aa). Positions 158–183 are enriched in basic residues; the sequence is ARSKRSSPKSRRGKKKSHENKNKGIR. Residues 185-199 show a composition bias toward polar residues; it reads HPTQLKASELDSTFA. The span at 258–294 shows a compositional bias: acidic residues; the sequence is TDCEVNDVEEEELEEEEELEEEEEEELGEDGVEEADM. Residues 299 to 313 show a composition bias toward basic and acidic residues; the sequence is SAKEPEIRCEEKPED. C2H2-type zinc fingers lie at residues 355 to 377 and 385 to 407; these read FPCQ…MHIH and FKCK…ERRH. 3 disordered regions span residues 400–446, 492–542, and 618–655; these read RRRH…QLGQ, RRHQ…EEEG, and LLKD…STAP. Ser-416 is modified (phosphoserine). Basic and acidic residues predominate over residues 427 to 439; sequence DGKGENVTSKDES. Residues 476 to 499 form a C2H2-type 3 zinc finger; that stretch reads HPCKYCKKVFGTHTNMRRHQRRVH. Ser-637 bears the Phosphoserine mark. Residues Lys-645, Lys-684, and Lys-686 each participate in a glycyl lysine isopeptide (Lys-Gly) (interchain with G-Cter in SUMO2) cross-link. 3 disordered regions span residues 724–794, 823–1075, and 1088–1112; these read TSSR…SPPC, SGVK…SSVV, and VTFK…AGGQ. Residues 733 to 743 are compositionally biased toward low complexity; it reads SSPPSSPQHSP. Position 738 is a phosphoserine (Ser-738). Lys-769 is covalently cross-linked (Glycyl lysine isopeptide (Lys-Gly) (interchain with G-Cter in SUMO2)). Phosphoserine occurs at positions 776, 780, and 791. Residues 823–832 show a composition bias toward polar residues; that stretch reads SGVKQKSEGT. Residues 846–863 show a composition bias toward basic and acidic residues; that stretch reads SVHKKPCDSEGKEFKENH. Residues Lys-860 and Lys-870 each participate in a glycyl lysine isopeptide (Lys-Gly) (interchain with G-Cter in SUMO2) cross-link. Composition is skewed to polar residues over residues 891–912 and 943–952; these read SLPT…SPDT and LQTASLSSGQ. The segment covering 962–983 has biased composition (pro residues); it reads PSSPPPCPPVLTVATPPPPLLP. Over residues 993–1009 the composition is skewed to polar residues; sequence DASPQQCPSPFSNTTAQ. A compositionally biased stretch (low complexity) spans 1010–1019; it reads SPLPILSPTV. The span at 1020 to 1030 shows a compositional bias: pro residues; that stretch reads SPSPSPIPPVE. Residues 1034 to 1062 are compositionally biased toward low complexity; that stretch reads SAASPGPPTLSSSSSSSSSFPSSSCSSTS. The segment covering 1091–1106 has biased composition (basic and acidic residues); sequence KQEESESEGLKPKEEA. 3 consecutive C2H2-type zinc fingers follow at residues 1123-1145, 1151-1174, and 1180-1203; these read FICN…LSVH, FKCE…FLLH, and FVCS…RDLH. Glycyl lysine isopeptide (Lys-Gly) (interchain with G-Cter in SUMO2) cross-links involve residues Lys-1136 and Lys-1140. A compositionally biased stretch (polar residues) spans 1218–1227; that stretch reads LRPQNFTDPS. Residues 1218 to 1251 are disordered; that stretch reads LRPQNFTDPSKANVEHMPSLPEEPLETSREEELN. Residue Lys-1269 forms a Glycyl lysine isopeptide (Lys-Gly) (interchain with G-Cter in SUMO2) linkage. A C2H2-type 7; atypical zinc finger spans residues 1321–1343; that stretch reads IRCTKCGKGVDNMPELHKHILAC. The segment at 1443–1465 adopts a C2H2-type 8; atypical zinc-finger fold; the sequence is HICPYCDREFTYIGSLNKHAAFS. Residues 1466–1563 are disordered; sequence CPKKPLSPSK…KKASSSSLRN (98 aa). Residues 1474-1486 are compositionally biased toward basic residues; that stretch reads SKRKVSHSSKKGG. Residues 1487-1498 show a composition bias toward low complexity; sequence HASSSSSDRNSS. The span at 1528 to 1544 shows a compositional bias: polar residues; the sequence is GPAQASLPSSSFRSRQN. Residues 1548–1563 are compositionally biased toward low complexity; sequence AASVKSKKASSSSLRN.

Belongs to the class V-like SAM-binding methyltransferase superfamily. As to quaternary structure, binds to the retinoblastoma protein (RB). Interacts with GATA3.

The protein resides in the nucleus. It carries out the reaction L-lysyl-[histone] + S-adenosyl-L-methionine = N(6)-methyl-L-lysyl-[histone] + S-adenosyl-L-homocysteine + H(+). The enzyme catalyses L-lysyl(9)-[histone H3] + 3 S-adenosyl-L-methionine = N(6),N(6),N(6)-trimethyl-L-lysyl(9)-[histone H3] + 3 S-adenosyl-L-homocysteine + 3 H(+). Functionally, S-adenosyl-L-methionine-dependent histone methyltransferase that specifically methylates 'Lys-9' of histone H3. May function as a DNA-binding transcription factor. Binds to the macrophage-specific TPA-responsive element (MTE) of the HMOX1 (heme oxygenase 1) gene and may act as a transcriptional activator of this gene. The polypeptide is PR domain zinc finger protein 2 (Prdm2) (Rattus norvegicus (Rat)).